The sequence spans 429 residues: Zygotic gap protein knirps (429 aa).

Positions 2–78 form a DNA-binding region, nuclear receptor; that stretch reads NQTCKVCGEP…VGMSKGGSRY (77 aa). NR C4-type zinc fingers lie at residues 5-25 and 42-66; these read CKVC…CEGC and CKNE…LRKC. Low complexity predominate over residues 112-126; sequence SVGGAPSASSPVGSP. Disordered regions lie at residues 112 to 148, 223 to 250, 338 to 357, and 375 to 397; these read SVGG…QQQQ, QSVD…SSAR, TSRS…QEVE, and SSSS…AEVK. Polar residues-rich tracts occupy residues 225–237 and 338–349; these read VDSV…FSPA and TSRSSVHSFNDS. The span at 375–393 shows a compositional bias: low complexity; that stretch reads SSSSSSHSAAHSPNTTTAH.

This sequence belongs to the nuclear hormone receptor family. NR0 subfamily.

The protein localises to the nucleus. In terms of biological role, transcriptional repressor. Binds to multiple sites in the eve stripe 3 enhancer element. Plays an essential role in the segmentation process both by refining the expression patterns of gap genes and by establishing pair-rules stripes of gene expression. In Drosophila melanogaster (Fruit fly), this protein is Zygotic gap protein knirps (kni).